We begin with the raw amino-acid sequence, 225 residues long: Plasma membrane-associated cation-binding protein 1 (225 aa).

Glycine 2 carries the N-myristoyl glycine lipid modification. Position 32 is a phosphothreonine (threonine 32). A Phosphoserine modification is found at serine 107. Basic and acidic residues predominate over residues 140–197 (PVEEVKAEEPAKTEEPAKTEGTSGEKEEIVEETKKGETPETAVVEEKKPEVEEKKEEA). The disordered stretch occupies residues 140–225 (PVEEVKAEEP…TAPVAEPPKP (86 aa)). 2 positions are modified to phosphothreonine: threonine 152 and threonine 177.

This sequence belongs to the DREPP family. Interacts with Turnip mosaic virus (TuMV) P3N-PIPO. Cu(2+) serves as cofactor. As to expression, mostly expressed in the basal region of hypocotyls. Expressed in seedlings, roots, shoots, stems, leaves (e.g. in epidermis and vascular tissues), flowers (e.g. in pistils and anthers) and siliques (at protein level).

The protein localises to the cell membrane. The protein resides in the cytoplasm. It is found in the cytoskeleton. Its subcellular location is the cell junction. It localises to the plasmodesma. May be involved in intracellular signaling through interaction with PtdInsPs and calmodulin (CaM); may keep PtdInsPs attached to the plasma membrane until Ca(2+)-CaM reaches a competitive concentration subsequent to an increase triggered by a stimulus, thus leading to PtdInsPs release and subsequent activation of InsPs-dependent signaling cascade. Interacts competitively at the N-terminus with calcium ions and CaM (in a calcium-dependent manner), and with the phosphatidylinositol phosphates PtdIns(3,4,5)P(3), PtdIns(3,4)P(2), PtdIns(4,5)P(2) and PtdIns(3,5)P(2). Also binds weakly to PtdIns(3)P, PtdIns(4)P and PtdIns(5)P. Negative regulator of hypocotyl cell elongation by destabilizing cortical microtubules in a calcium-dependent manner. Binds directly to and destabilized microtubules to enhance microtubule depolymerization when cytoplasmic calcium increases. In case of Turnip mosaic virus (TuMV) infection, confers sensitivity by promoting viral cell-to-cell movement through interaction with viral P3N-PIPO. The chain is Plasma membrane-associated cation-binding protein 1 (PCAP1) from Arabidopsis thaliana (Mouse-ear cress).